Reading from the N-terminus, the 469-residue chain is Probable monogalactosyldiacylglycerol synthase 2, chloroplastic (469 aa).

A chloroplast-targeting transit peptide spans 1-42; the sequence is MVISVATPRRSIRDAVLGGVLGAGGRQLYQPLRCAFYDGAAG.

The protein belongs to the glycosyltransferase 28 family.

Its subcellular location is the plastid. The protein resides in the chloroplast membrane. It carries out the reaction a 1,2-diacyl-sn-glycerol + UDP-alpha-D-galactose = a 1,2-diacyl-3-O-(beta-D-galactosyl)-sn-glycerol + UDP + H(+). Its function is as follows. Involved in the synthesis of the major structural component of photosynthetic membranes. The sequence is that of Probable monogalactosyldiacylglycerol synthase 2, chloroplastic (MGD2) from Oryza sativa subsp. indica (Rice).